Reading from the N-terminus, the 239-residue chain is Terpene cyclase idtB (239 aa).

5 helical membrane-spanning segments follow: residues 20 to 40, 50 to 70, 75 to 95, 113 to 133, and 138 to 158; these read MADTFVAGMGLGWIVNYALMI, CMALLPLCNNIAWELTYTIVY, RVELLVFAIGLTLNFFIMVGA, AGFILLVGTLLCFTGHVALAM, and GLAYSWGAVVCQLALSIGGLF. Asn-164 is a glycosylation site (N-linked (GlcNAc...) asparagine). Residues 197 to 217 form a helical membrane-spanning segment; that stretch reads EVFGWLASPLVLWSLVTFLLA.

This sequence belongs to the paxB family.

Its subcellular location is the membrane. Its pathway is secondary metabolite biosynthesis. In terms of biological role, terpene cyclase; part of the gene cluster that mediates the biosynthesis of paspalitrems, indole-diterpene (IDT) mycotoxins that are potent tremorgens in mammals. The geranylgeranyl diphosphate (GGPP) synthase idtG is proposed to catalyze the first step in IDT biosynthesis via catalysis of a series of iterative condensations of isopentenyl diphosphate (IPP) with dimethylallyl diphosphate (DMAPP), geranyl diphosphate (GPP), and farnesyl diphosphate (FPP), to form GGPP. Condensation of indole-3-glycerol phosphate with GGPP by the prenyltransferase idtC then forms 3-geranylgeranylindole (3-GGI). Epoxidation of the two terminal alkenes of the geranylgeranyl moiety by the FAD-dependent monooxygenase idtM, and cyclization by the terpene cyclase idtB then leads to the production of paspaline. The cytochrome P450 monooxygenase idtP then catalyzes oxidative elimination of the pendant methyl group at C-12 of paspaline and generates the C-10 ketone to yield 13-desoxypaxilline. The cytochrome P450 monooxygenase idtQ may catalyze the C-13 oxidation of 13-desoxypaxilline to afford paxilline. Considering that both paspalicine and paxilline were detected in C.paspali, idtQ also catalyzes the formation of paspalinine from 13-desoxypaxilline via paspalicine as an intermediate. Finally, the alpha-prenyltransferase idtF prenylates paspalinine at the C-20 or the C-21 positions to yield paspalitrems A and C, respectively. The hydroxylation of paspalitrem A at C-32 by a still unknown oxidase affords paspalitrem B. This is Terpene cyclase idtB from Claviceps paspali (Rye ergot fungus).